The following is a 450-amino-acid chain: tRNA-2-methylthio-N(6)-dimethylallyladenosine synthase (450 aa).

Positions 17 to 131 (KKFFVKTYGC…LNHVLDEVLA (115 aa)) constitute an MTTase N-terminal domain. [4Fe-4S] cluster is bound by residues Cys26, Cys62, Cys94, Cys168, Cys172, and Cys175. The 232-residue stretch at 154-385 (REDQIKAYVS…LQLQDTIYMK (232 aa)) folds into the Radical SAM core domain. The 63-residue stretch at 388–450 (QAFLGQTVEV…SHQTLLGDLQ (63 aa)) folds into the TRAM domain.

Belongs to the methylthiotransferase family. MiaB subfamily. As to quaternary structure, monomer. [4Fe-4S] cluster is required as a cofactor.

Its subcellular location is the cytoplasm. It catalyses the reaction N(6)-dimethylallyladenosine(37) in tRNA + (sulfur carrier)-SH + AH2 + 2 S-adenosyl-L-methionine = 2-methylsulfanyl-N(6)-dimethylallyladenosine(37) in tRNA + (sulfur carrier)-H + 5'-deoxyadenosine + L-methionine + A + S-adenosyl-L-homocysteine + 2 H(+). Catalyzes the methylthiolation of N6-(dimethylallyl)adenosine (i(6)A), leading to the formation of 2-methylthio-N6-(dimethylallyl)adenosine (ms(2)i(6)A) at position 37 in tRNAs that read codons beginning with uridine. In Protochlamydia amoebophila (strain UWE25), this protein is tRNA-2-methylthio-N(6)-dimethylallyladenosine synthase.